A 588-amino-acid chain; its full sequence is Transcription factor tau 60 kDa subunit (588 aa).

Positions 399 to 588 (LPKLPENFSM…VYCGTTLEVM (190 aa)) are sufficient for SPT15-binding.

In terms of assembly, heterodimer with TFC6. Component of the TFIIIC complex composed of TFC1, TFC3, TFC4, TFC6, TFC7 and TFC8. The subunits are organized in two globular domains, tauA and tauB, connected by a proteolysis-sensitive and flexible linker. Interacts with SPT15 and directly with TFC6.

Its subcellular location is the nucleus. Functionally, TFIIIC mediates tRNA and 5S RNA gene activation by binding to intragenic promoter elements. Upstream of the transcription start site, TFIIIC assembles the initiation complex TFIIIB-TFIIIC-tDNA, which is sufficient for RNA polymerase III recruitment and function. Part of the tauB domain of TFIIIC that binds boxB DNA promoter sites of tRNA and similar genes. Plays a role in TFIIB assembly through its interaction with SPT15/TBP. Essential for cell viability. The chain is Transcription factor tau 60 kDa subunit (TFC8) from Saccharomyces cerevisiae (strain ATCC 204508 / S288c) (Baker's yeast).